The following is a 474-amino-acid chain: Aspartyl/glutamyl-tRNA(Asn/Gln) amidotransferase subunit B (474 aa).

This sequence belongs to the GatB/GatE family. GatB subfamily. As to quaternary structure, heterotrimer of A, B and C subunits.

The enzyme catalyses L-glutamyl-tRNA(Gln) + L-glutamine + ATP + H2O = L-glutaminyl-tRNA(Gln) + L-glutamate + ADP + phosphate + H(+). It carries out the reaction L-aspartyl-tRNA(Asn) + L-glutamine + ATP + H2O = L-asparaginyl-tRNA(Asn) + L-glutamate + ADP + phosphate + 2 H(+). Its function is as follows. Allows the formation of correctly charged Asn-tRNA(Asn) or Gln-tRNA(Gln) through the transamidation of misacylated Asp-tRNA(Asn) or Glu-tRNA(Gln) in organisms which lack either or both of asparaginyl-tRNA or glutaminyl-tRNA synthetases. The reaction takes place in the presence of glutamine and ATP through an activated phospho-Asp-tRNA(Asn) or phospho-Glu-tRNA(Gln). The protein is Aspartyl/glutamyl-tRNA(Asn/Gln) amidotransferase subunit B of Limosilactobacillus fermentum (strain NBRC 3956 / LMG 18251) (Lactobacillus fermentum).